We begin with the raw amino-acid sequence, 177 residues long: Large ribosomal subunit protein uL6 (177 aa).

It belongs to the universal ribosomal protein uL6 family. As to quaternary structure, part of the 50S ribosomal subunit.

Its function is as follows. This protein binds to the 23S rRNA, and is important in its secondary structure. It is located near the subunit interface in the base of the L7/L12 stalk, and near the tRNA binding site of the peptidyltransferase center. The sequence is that of Large ribosomal subunit protein uL6 from Methylobacillus flagellatus (strain ATCC 51484 / DSM 6875 / VKM B-1610 / KT).